Here is a 535-residue protein sequence, read N- to C-terminus: Glutamyl-tRNA reductase 3, chloroplastic (535 aa).

The active-site Nucleophile is the C131. Substrate is bound by residues 131 to 133, S190, 195 to 197, and Q201; these read CNR and EGQ. An NADP(+)-binding site is contributed by 272–277; the sequence is GAGKMG.

It belongs to the glutamyl-tRNA reductase family. In terms of tissue distribution, primarily expressed in roots.

It is found in the plastid. It localises to the chloroplast. The catalysed reaction is (S)-4-amino-5-oxopentanoate + tRNA(Glu) + NADP(+) = L-glutamyl-tRNA(Glu) + NADPH + H(+). It participates in porphyrin-containing compound metabolism; protoporphyrin-IX biosynthesis; 5-aminolevulinate from L-glutamyl-tRNA(Glu): step 1/2. Functionally, catalyzes the NADPH-dependent reduction of glutamyl-tRNA(Glu) to glutamate 1-semialdehyde (GSA). This is Glutamyl-tRNA reductase 3, chloroplastic (HEMA3) from Hordeum vulgare (Barley).